Here is a 175-residue protein sequence, read N- to C-terminus: Adenine phosphoribosyltransferase (175 aa).

Belongs to the purine/pyrimidine phosphoribosyltransferase family. In terms of assembly, homodimer.

The protein localises to the cytoplasm. It carries out the reaction AMP + diphosphate = 5-phospho-alpha-D-ribose 1-diphosphate + adenine. It functions in the pathway purine metabolism; AMP biosynthesis via salvage pathway; AMP from adenine: step 1/1. Functionally, catalyzes a salvage reaction resulting in the formation of AMP, that is energically less costly than de novo synthesis. The sequence is that of Adenine phosphoribosyltransferase from Nitrosospira multiformis (strain ATCC 25196 / NCIMB 11849 / C 71).